A 268-amino-acid polypeptide reads, in one-letter code: Phosphatidylglycerol--prolipoprotein diacylglyceryl transferase (268 aa).

Helical transmembrane passes span 14 to 34 (LGPI…FAGW), 57 to 77 (LTFY…IIFY), 90 to 110 (FFLW…LIAF), and 117 to 137 (IGAN…IGLG). Residue Arg140 participates in a 1,2-diacyl-sn-glycero-3-phospho-(1'-sn-glycerol) binding. 3 helical membrane passes run 174–194 (QLFE…LVTI), 200–220 (YLVL…CEFF), and 238–258 (GQIL…AVFI).

It belongs to the Lgt family.

The protein localises to the cell inner membrane. It catalyses the reaction L-cysteinyl-[prolipoprotein] + a 1,2-diacyl-sn-glycero-3-phospho-(1'-sn-glycerol) = an S-1,2-diacyl-sn-glyceryl-L-cysteinyl-[prolipoprotein] + sn-glycerol 1-phosphate + H(+). It functions in the pathway protein modification; lipoprotein biosynthesis (diacylglyceryl transfer). Its function is as follows. Catalyzes the transfer of the diacylglyceryl group from phosphatidylglycerol to the sulfhydryl group of the N-terminal cysteine of a prolipoprotein, the first step in the formation of mature lipoproteins. The sequence is that of Phosphatidylglycerol--prolipoprotein diacylglyceryl transferase from Francisella tularensis subsp. novicida (strain U112).